Here is a 171-residue protein sequence, read N- to C-terminus: bZIP transcription factor 2 (171 aa).

Residues 1–24 (MASSSSTYRSSSSSDGGNNNPSDS) show a composition bias toward low complexity. The tract at residues 1-54 (MASSSSTYRSSSSSDGGNNNPSDSVVTVDERKRKRMLSNRESARRSRMRKQKHV) is disordered. The bZIP domain maps to 29–92 (DERKRKRMLS…MKIQAENSVL (64 aa)). A basic motif region spans residues 31–52 (RKRKRMLSNRESARRSRMRKQK). The leucine-zipper stretch occupies residues 57–71 (LTAQINQLSNDNRQI).

As to quaternary structure, forms heterodimers with BZIP9, BZIP10, BZIP25 and BZIP63. Component of a ternary complex composed of BZIP2-BZIP63 heterodimer and KIN10.

It is found in the nucleus. Transcription factor that binds to specific DNA sequences in target gene promoters. BZIP2-BZIP63-KIN10 complex binds to the ETFQO promoter to up-regulate its transcription. This Arabidopsis thaliana (Mouse-ear cress) protein is bZIP transcription factor 2.